Reading from the N-terminus, the 103-residue chain is Putative protein YmfH (103 aa).

A disordered region spans residues 1 to 34; it reads MVNAAQRTRVKVEADNRPSVDTHPPGVQPSPGTG. A compositionally biased stretch (basic and acidic residues) spans 10–20; the sequence is VKVEADNRPSV. The next 2 membrane-spanning stretches (helical) occupy residues 42 to 62 and 73 to 93; these read MLCV…TALF and GLIT…CFVE.

Its subcellular location is the cell inner membrane. This Escherichia coli (strain K12) protein is Putative protein YmfH (ymfH).